The primary structure comprises 363 residues: MKDNFSFAATSRNITSSRPFDNLNATGTNESAFNCSHKPSDKHLEAIPVLYYMIFVIGFAVNIVVVSLFCCQKGPKKVSSIYIFNLALADLLLLATLPLWATYYSYRYDWLFGPVMCKVFGSFLTLNMFASIFFITCMSVDRYQSVIYPFLSQRRNPWQASYVVPLVWCMACLSSLPTFYFRDVRTIEYLGVNACIMAFPPEKYAQWSAGIALMKNILGFIIPLIFIATCYFGIRKHLLKTNSYGKNRITRDQVLKMAAAVVLAFIICWLPFHVLTFLDALTWMGIINSCEVIAVIDLALPFAILLGFTNSCVNPFLYCFVGNRFQQKLRSVFRVPITWLQGKRETMSCRKGSSLREMDTFVS.

At 1–45 (MKDNFSFAATSRNITSSRPFDNLNATGTNESAFNCSHKPSDKHLE) the chain is on the extracellular side. Asn-4, Asn-13, Asn-24, Asn-29, and Asn-34 each carry an N-linked (GlcNAc...) asparagine glycan. Intrachain disulfides connect Cys-35-Cys-290 and Cys-117-Cys-195. Residues 46–70 (AIPVLYYMIFVIGFAVNIVVVSLFC) traverse the membrane as a helical segment. Over 71 to 80 (CQKGPKKVSS) the chain is Cytoplasmic. The chain crosses the membrane as a helical span at residues 81–104 (IYIFNLALADLLLLATLPLWATYY). Angiotensin II is bound by residues Tyr-103 and Tyr-104. The Extracellular segment spans residues 105–114 (SYRYDWLFGP). The chain crosses the membrane as a helical span at residues 115 to 140 (VMCKVFGSFLTLNMFASIFFITCMSV). Topologically, residues 141 to 159 (DRYQSVIYPFLSQRRNPWQ) are cytoplasmic. A helical membrane pass occupies residues 160-181 (ASYVVPLVWCMACLSSLPTFYF). Positions 182, 204, and 215 each coordinate angiotensin II. Topologically, residues 182–206 (RDVRTIEYLGVNACIMAFPPEKYAQ) are extracellular. Residues 207–232 (WSAGIALMKNILGFIIPLIFIATCYF) form a helical membrane-spanning segment. Residues 233–257 (GIRKHLLKTNSYGKNRITRDQVLKM) lie on the Cytoplasmic side of the membrane. Residues 258-281 (AAAVVLAFIICWLPFHVLTFLDAL) form a helical membrane-spanning segment. Asp-279 lines the angiotensin II pocket. Residues 282-294 (TWMGIINSCEVIA) lie on the Extracellular side of the membrane. The chain crosses the membrane as a helical span at residues 295–320 (VIDLALPFAILLGFTNSCVNPFLYCF). Asp-297 contacts angiotensin II. Residues 321 to 363 (VGNRFQQKLRSVFRVPITWLQGKRETMSCRKGSSLREMDTFVS) are Cytoplasmic-facing. Positions 324–333 (RFQQKLRSVF) are helix VIII. Ser-354 bears the Phosphoserine; by PKC mark.

Belongs to the G-protein coupled receptor 1 family. Interacts with MTUS1. In terms of tissue distribution, expressed at highest levels in adrenal gland and uterus.

It localises to the cell membrane. Its function is as follows. Receptor for angiotensin II, a vasoconstricting peptide. Signals primarily via a non-canonical G-protein- and beta-arrestin independent pathways. Cooperates with MTUS1 to inhibit ERK2 activation and cell proliferation. The polypeptide is Type-2 angiotensin II receptor (Mus musculus (Mouse)).